The sequence spans 127 residues: MTIPEDLRYTKDHEWIKLLEDGSTALVGITDFAQHELGDIVFVELKSAGTVLKQHEVFGTVEAVKTVADLFAPVAGELLELNALLDSAEIVNQDPYNDGWLVKMKVASPEAVHALLDAEAYRQLTGE.

Residues Thr-24–Lys-105 form the Lipoyl-binding domain. The residue at position 65 (Lys-65) is an N6-lipoyllysine.

This sequence belongs to the GcvH family. In terms of assembly, the glycine cleavage system is composed of four proteins: P, T, L and H. Requires (R)-lipoate as cofactor.

In terms of biological role, the glycine cleavage system catalyzes the degradation of glycine. The H protein shuttles the methylamine group of glycine from the P protein to the T protein. This is Glycine cleavage system H protein from Pelodictyon phaeoclathratiforme (strain DSM 5477 / BU-1).